The sequence spans 154 residues: Large ribosomal subunit protein uL30 (154 aa).

The protein belongs to the universal ribosomal protein uL30 family. Part of the 50S ribosomal subunit.

The protein is Large ribosomal subunit protein uL30 of Methanococcus maripaludis (strain DSM 14266 / JCM 13030 / NBRC 101832 / S2 / LL).